A 130-amino-acid chain; its full sequence is Small ribosomal subunit protein uS9 (130 aa).

The disordered stretch occupies residues 105–130; it reads TRDPRMKERKKYGLKKARRAPQFSKR. Basic residues predominate over residues 111–130; the sequence is KERKKYGLKKARRAPQFSKR.

The protein belongs to the universal ribosomal protein uS9 family.

The protein is Small ribosomal subunit protein uS9 of Acetivibrio thermocellus (strain ATCC 27405 / DSM 1237 / JCM 9322 / NBRC 103400 / NCIMB 10682 / NRRL B-4536 / VPI 7372) (Clostridium thermocellum).